A 285-amino-acid polypeptide reads, in one-letter code: V-set and transmembrane domain-containing protein 2B (285 aa).

A signal peptide spans 1–28 (MEQRNRLGALGYLLPLLLHSLLLFVADA). The Ig-like V-type domain occupies 29–143 (TFTEVPKDVT…DDDTQEHKAQ (115 aa)). Residues 29–263 (TFTEVPKDVT…HGSGTGPGYS (235 aa)) are Extracellular-facing. Cysteines 49 and 127 form a disulfide. The interval 160 to 225 (AEAVSHIQSS…AAAAAASATH (66 aa)) is disordered. Low complexity-rich tracts occupy residues 176 to 189 (ASSA…GAAV) and 208 to 225 (PAGS…SATH). A helical membrane pass occupies residues 264–284 (ADPLLSLLLLALHKFLHPLLG). Position 285 (H285) is a topological domain, cytoplasmic.

The protein localises to the membrane. This chain is V-set and transmembrane domain-containing protein 2B (Vstm2b), found in Mus musculus (Mouse).